The chain runs to 518 residues: Putative N-acetylmuramoyl-L-alanine amidase YrvJ (518 aa).

A signal peptide spans 1 to 27 (MNKKYFVLIVCIIFTSALFPTFSSVTA). SH3b domains lie at 29 to 91 (QGEA…ITKE), 102 to 164 (SDTV…TSGG), 181 to 243 (STTG…LTSS), and 258 to 320 (AKKA…VQTS). 2 disordered regions span residues 94–121 (ASTS…PGTS) and 160–186 (VTSG…TGTV). Composition is skewed to low complexity over residues 95–108 (STSS…VTST) and 160–169 (VTSGGSSSAS). Residues 322–352 (SAEEAGEPPVSDSPSGNGSLNNKTIIVDPGH) form a disordered region. A compositionally biased stretch (polar residues) spans 333-345 (DSPSGNGSLNNKT). Residues 346–514 (IIVDPGHGGK…VTDGIESGLE (169 aa)) form the MurNAc-LAA domain.

This sequence belongs to the N-acetylmuramoyl-L-alanine amidase 3 family.

The protein resides in the secreted. The protein localises to the cell wall. The catalysed reaction is Hydrolyzes the link between N-acetylmuramoyl residues and L-amino acid residues in certain cell-wall glycopeptides.. Probably involved in cell-wall metabolism. The polypeptide is Putative N-acetylmuramoyl-L-alanine amidase YrvJ (yrvJ) (Bacillus subtilis (strain 168)).